The following is a 333-amino-acid chain: Acetyl-coenzyme A carboxylase carboxyl transferase subunit alpha (333 aa).

The 261-residue stretch at 48–308 (ALEVKVETLR…KEMLIEELRI (261 aa)) folds into the CoA carboxyltransferase C-terminal domain.

Belongs to the AccA family. As to quaternary structure, acetyl-CoA carboxylase is a heterohexamer composed of biotin carboxyl carrier protein (AccB), biotin carboxylase (AccC) and two subunits each of ACCase subunit alpha (AccA) and ACCase subunit beta (AccD).

It is found in the cytoplasm. It carries out the reaction N(6)-carboxybiotinyl-L-lysyl-[protein] + acetyl-CoA = N(6)-biotinyl-L-lysyl-[protein] + malonyl-CoA. It functions in the pathway lipid metabolism; malonyl-CoA biosynthesis; malonyl-CoA from acetyl-CoA: step 1/1. In terms of biological role, component of the acetyl coenzyme A carboxylase (ACC) complex. First, biotin carboxylase catalyzes the carboxylation of biotin on its carrier protein (BCCP) and then the CO(2) group is transferred by the carboxyltransferase to acetyl-CoA to form malonyl-CoA. The chain is Acetyl-coenzyme A carboxylase carboxyl transferase subunit alpha from Chlorobium phaeobacteroides (strain DSM 266 / SMG 266 / 2430).